The following is a 351-amino-acid chain: Holliday junction branch migration complex subunit RuvB (351 aa).

Positions 1 to 186 (MDEKIETRLI…FGIVQRLEFY (186 aa)) are large ATPase domain (RuvB-L). Residues Ile-25, Arg-26, Gly-67, Lys-70, Thr-71, Thr-72, 133 to 135 (EDF), Arg-176, Tyr-186, and Arg-223 each bind ATP. Thr-71 lines the Mg(2+) pocket. The interval 187–257 (RIPDLIHIVK…IAKEALDLLN (71 aa)) is small ATPAse domain (RuvB-S). The segment at 260 to 351 (IRGLDVMDRK…ENFDLLGKVE (92 aa)) is head domain (RuvB-H). Arg-296, Arg-315, and Arg-320 together coordinate DNA.

Belongs to the RuvB family. Homohexamer. Forms an RuvA(8)-RuvB(12)-Holliday junction (HJ) complex. HJ DNA is sandwiched between 2 RuvA tetramers; dsDNA enters through RuvA and exits via RuvB. An RuvB hexamer assembles on each DNA strand where it exits the tetramer. Each RuvB hexamer is contacted by two RuvA subunits (via domain III) on 2 adjacent RuvB subunits; this complex drives branch migration. In the full resolvosome a probable DNA-RuvA(4)-RuvB(12)-RuvC(2) complex forms which resolves the HJ.

The protein localises to the cytoplasm. It catalyses the reaction ATP + H2O = ADP + phosphate + H(+). In terms of biological role, the RuvA-RuvB-RuvC complex processes Holliday junction (HJ) DNA during genetic recombination and DNA repair, while the RuvA-RuvB complex plays an important role in the rescue of blocked DNA replication forks via replication fork reversal (RFR). RuvA specifically binds to HJ cruciform DNA, conferring on it an open structure. The RuvB hexamer acts as an ATP-dependent pump, pulling dsDNA into and through the RuvAB complex. RuvB forms 2 homohexamers on either side of HJ DNA bound by 1 or 2 RuvA tetramers; 4 subunits per hexamer contact DNA at a time. Coordinated motions by a converter formed by DNA-disengaged RuvB subunits stimulates ATP hydrolysis and nucleotide exchange. Immobilization of the converter enables RuvB to convert the ATP-contained energy into a lever motion, pulling 2 nucleotides of DNA out of the RuvA tetramer per ATP hydrolyzed, thus driving DNA branch migration. The RuvB motors rotate together with the DNA substrate, which together with the progressing nucleotide cycle form the mechanistic basis for DNA recombination by continuous HJ branch migration. Branch migration allows RuvC to scan DNA until it finds its consensus sequence, where it cleaves and resolves cruciform DNA. This is Holliday junction branch migration complex subunit RuvB from Coxiella burnetii (strain RSA 331 / Henzerling II).